Consider the following 130-residue polypeptide: Phosphoribosyl-AMP cyclohydrolase (130 aa).

Mg(2+) is bound at residue Asp78. Cys79 lines the Zn(2+) pocket. Residues Asp80 and Asp82 each contribute to the Mg(2+) site. 2 residues coordinate Zn(2+): Cys96 and Cys103.

Belongs to the PRA-CH family. In terms of assembly, homodimer. Mg(2+) is required as a cofactor. The cofactor is Zn(2+).

The protein resides in the cytoplasm. The enzyme catalyses 1-(5-phospho-beta-D-ribosyl)-5'-AMP + H2O = 1-(5-phospho-beta-D-ribosyl)-5-[(5-phospho-beta-D-ribosylamino)methylideneamino]imidazole-4-carboxamide. It participates in amino-acid biosynthesis; L-histidine biosynthesis; L-histidine from 5-phospho-alpha-D-ribose 1-diphosphate: step 3/9. Functionally, catalyzes the hydrolysis of the adenine ring of phosphoribosyl-AMP. The sequence is that of Phosphoribosyl-AMP cyclohydrolase from Methylobacillus flagellatus (strain ATCC 51484 / DSM 6875 / VKM B-1610 / KT).